A 615-amino-acid chain; its full sequence is 70 kDa neurofilament protein (615 aa).

Residues Met-1–Tyr-31 are disordered. The tract at residues Met-1–Asp-99 is head. A compositionally biased stretch (polar residues) spans Arg-21–Ser-30. One can recognise an IF rod domain in the interval Glu-96–Val-449. A coil 1A region spans residues Met-100–Trp-135. The segment at Gly-136–Met-145 is linker 1. The interval Tyr-146–Ala-284 is coil 1B. The interval Ala-285 to Leu-303 is linker 12. Positions Ala-304–Val-449 are coil 2. The interval Gly-450–Gln-615 is tail. The LTD domain maps to Ala-499–Thr-612.

It belongs to the intermediate filament family.

The chain is 70 kDa neurofilament protein from Doryteuthis pealeii (Longfin inshore squid).